The primary structure comprises 392 residues: MATAAQGPLSLLWGWLWSERFWLPENVSWADLEGPADGYGYPRGRHILSVFPLAAGIFFVRLLFERFIAKPCALCIGIEDSGPYQAQPNAILEKVFISITKYPDKKRLEGLSKQLDWNVRKIQCWFRHRRNQDKPPTLTKFCESMWRFTFYLCIFCYGIRFLWSSPWFWDIRQCWHNYPFQPLSSGLYHYYIMELAFYWSLMFSQFTDIKRKDFLIMFVHHLVTIGLISFSYINNMVRVGTLIMCLHDVSDFLLEAAKLANYAKYQRLCDTLFVIFSAVFMVTRLGIYPFWILNTTLFESWEIIGPYASWWLLNGLLLTLQLLHVIWSYLIARIALKALIRGKVSKDDRSDVESSSEEEDVTTCTKSPCDSSSSNGANRVNGHMGGSYWAEE.

The Lumenal portion of the chain corresponds to 1–46 (MATAAQGPLSLLWGWLWSERFWLPENVSWADLEGPADGYGYPRGRH). N-linked (GlcNAc...) asparagine glycosylation occurs at asparagine 26. The chain crosses the membrane as a helical span at residues 47–67 (ILSVFPLAAGIFFVRLLFERF). The segment at 75-136 (CIGIEDSGPY…RHRRNQDKPP (62 aa)) is homeobox-like. Positions 139-340 (TKFCESMWRF…IARIALKALI (202 aa)) constitute a TLC domain. 4 consecutive transmembrane segments (helical) span residues 148 to 168 (FTFYLCIFCYGIRFLWSSPWF), 183 to 203 (LSSGLYHYYIMELAFYWSLMF), 214 to 234 (FLIMFVHHLVTIGLISFSYIN), and 272 to 292 (LFVIFSAVFMVTRLGIYPFWI). The Last loop motif signature appears at 299–309 (ESWEIIGPYAS). The chain crosses the membrane as a helical span at residues 311–331 (WLLNGLLLTLQLLHVIWSYLI). Residues 332–392 (ARIALKALIR…HMGGSYWAEE (61 aa)) are Cytoplasmic-facing. The segment at 349 to 392 (RSDVESSSEEEDVTTCTKSPCDSSSSNGANRVNGHMGGSYWAEE) is disordered. Polar residues predominate over residues 362–378 (TTCTKSPCDSSSSNGAN).

In terms of assembly, interacts with PAQR4; the interaction regulates the stability and activity of CERS5 and is inhibited in presence of ceramides. In terms of processing, phosphorylated at the C-terminus by CK2.

Its subcellular location is the endoplasmic reticulum membrane. The enzyme catalyses a sphingoid base + hexadecanoyl-CoA = an N-hexadecanoyl-sphingoid base + CoA + H(+). The catalysed reaction is sphinganine + hexadecanoyl-CoA = N-hexadecanoylsphinganine + CoA + H(+). It catalyses the reaction hexadecasphinganine + hexadecanoyl-CoA = N-hexadecanoylhexadecasphinganine + CoA + H(+). It carries out the reaction sphing-4-enine + hexadecanoyl-CoA = N-hexadecanoylsphing-4-enine + CoA + H(+). The enzyme catalyses 2-hydroxyhexadecanoyl-CoA + sphinganine = N-(2-hydroxyhexadecanoyl)-sphinganine + CoA + H(+). The catalysed reaction is sphinganine + tetradecanoyl-CoA = N-(tetradecanoyl)-sphinganine + CoA + H(+). It catalyses the reaction sphinganine + octadecanoyl-CoA = N-(octadecanoyl)-sphinganine + CoA + H(+). It carries out the reaction sphinganine + (9Z)-octadecenoyl-CoA = N-(9Z-octadecenoyl)-sphinganine + CoA + H(+). The enzyme catalyses a fatty acyl-CoA + sphing-4-enine = an N-acylsphing-4-enine + CoA + H(+). The protein operates within lipid metabolism; sphingolipid metabolism. Its activity is regulated as follows. Inhibited by fumonisin B1. Functionally, ceramide synthase that catalyzes the transfer of the acyl chain from acyl-CoA to a sphingoid base, with high selectivity toward palmitoyl-CoA (hexadecanoyl-CoA; C16:0-CoA). Can use other acyl donors, but with less efficiency. N-acylates sphinganine and sphingosine bases to form dihydroceramides and ceramides in de novo synthesis and salvage pathways, respectively. Plays a role in de novo ceramide synthesis and surfactant homeostasis in pulmonary epithelia. The sequence is that of Ceramide synthase 5 from Homo sapiens (Human).